Here is a 175-residue protein sequence, read N- to C-terminus: Peptide methionine sulfoxide reductase MsrA (175 aa).

The active site involves C10.

It belongs to the MsrA Met sulfoxide reductase family.

The catalysed reaction is L-methionyl-[protein] + [thioredoxin]-disulfide + H2O = L-methionyl-(S)-S-oxide-[protein] + [thioredoxin]-dithiol. It carries out the reaction [thioredoxin]-disulfide + L-methionine + H2O = L-methionine (S)-S-oxide + [thioredoxin]-dithiol. In terms of biological role, has an important function as a repair enzyme for proteins that have been inactivated by oxidation. Catalyzes the reversible oxidation-reduction of methionine sulfoxide in proteins to methionine. The sequence is that of Peptide methionine sulfoxide reductase MsrA from Clavibacter michiganensis subsp. michiganensis (strain NCPPB 382).